The chain runs to 249 residues: Phosphate import ATP-binding protein PstB 2 (249 aa).

The 241-residue stretch at 4–244 (IEVRDLDLFY…PKDKRTEDYI (241 aa)) folds into the ABC transporter domain. 36-43 (GPSGCGKS) lines the ATP pocket.

This sequence belongs to the ABC transporter superfamily. Phosphate importer (TC 3.A.1.7) family. The complex is composed of two ATP-binding proteins (PstB), two transmembrane proteins (PstC and PstA) and a solute-binding protein (PstS).

The protein resides in the cell membrane. The enzyme catalyses phosphate(out) + ATP + H2O = ADP + 2 phosphate(in) + H(+). Part of the ABC transporter complex PstSACB involved in phosphate import. Responsible for energy coupling to the transport system. The chain is Phosphate import ATP-binding protein PstB 2 from Caldanaerobacter subterraneus subsp. tengcongensis (strain DSM 15242 / JCM 11007 / NBRC 100824 / MB4) (Thermoanaerobacter tengcongensis).